We begin with the raw amino-acid sequence, 179 residues long: NADH-quinone oxidoreductase subunit I (179 aa).

4Fe-4S ferredoxin-type domains follow at residues Leu-49–Gly-79 and Glu-89–Asp-118. Residues Cys-59, Cys-62, Cys-65, Cys-69, Cys-98, Cys-101, Cys-104, and Cys-108 each contribute to the [4Fe-4S] cluster site.

The protein belongs to the complex I 23 kDa subunit family. As to quaternary structure, NDH-1 is composed of 14 different subunits. Subunits NuoA, H, J, K, L, M, N constitute the membrane sector of the complex. Requires [4Fe-4S] cluster as cofactor.

Its subcellular location is the cell inner membrane. The enzyme catalyses a quinone + NADH + 5 H(+)(in) = a quinol + NAD(+) + 4 H(+)(out). Its function is as follows. NDH-1 shuttles electrons from NADH, via FMN and iron-sulfur (Fe-S) centers, to quinones in the respiratory chain. The immediate electron acceptor for the enzyme in this species is believed to be ubiquinone. Couples the redox reaction to proton translocation (for every two electrons transferred, four hydrogen ions are translocated across the cytoplasmic membrane), and thus conserves the redox energy in a proton gradient. The sequence is that of NADH-quinone oxidoreductase subunit I from Chromohalobacter salexigens (strain ATCC BAA-138 / DSM 3043 / CIP 106854 / NCIMB 13768 / 1H11).